The sequence spans 211 residues: UPF0056 membrane protein BUsg_257 (211 aa).

6 helical membrane-spanning segments follow: residues 14 to 34, 54 to 74, 76 to 96, 116 to 136, 144 to 164, and 185 to 205; these read FFVSLCALVNPIGMIPIFTTM, AFIILLISLFAGNSILNAFGI, INSFRIAGGILIISIAFSMIS, VVPLAMPLIAGPGAISSTIVW, SDFLGCSIAIFLFAFVCWLCF, and IMGLLLMSLGIEFLSIGIKSI.

Belongs to the UPF0056 (MarC) family.

Its subcellular location is the cell membrane. The sequence is that of UPF0056 membrane protein BUsg_257 from Buchnera aphidicola subsp. Schizaphis graminum (strain Sg).